The sequence spans 1037 residues: Tyrosine-protein kinase-like otk (1037 aa).

An N-terminal signal peptide occupies residues 1–23 (MDMDVMMISMCILASTFMAPGWA). 5 Ig-like C2-type domains span residues 24–109 (STSG…REAS), 110–199 (PPAK…RVMS), 251–365 (PEDL…APLN), 368–464 (PGLL…VSIN), and 469–559 (PKFS…VQLV). At 24–582 (STSGFLRVPQ…GGDGFLVTRA (559 aa)) the chain is on the extracellular side. 5 disulfide bridges follow: C47–C96, C138–C188, C276–C354, C399–C448, and C491–C543. N-linked (GlcNAc...) asparagine glycosylation is found at N336, N418, N430, N445, N513, and N525. The helical transmembrane segment at 583–603 (VLITMTVALAYIVLVVGLMLW) threads the bilayer. At 604-1037 (CRYRRQARKA…SKAMQSVAEK (434 aa)) the chain is on the cytoplasmic side. 2 disordered regions span residues 623–683 (AGGD…KSVY) and 720–777 (SAQS…KEEE). Residues 658 to 676 (KSNGDAQKSDDTACSQQSR) are compositionally biased toward polar residues. A Phosphoserine modification is found at S681. The Protein kinase; inactive domain occupies 693 to 1031 (LSELLQIGRG…QLGSALSKAM (339 aa)). Over residues 723-734 (SDKDADTEKQHS) the composition is skewed to basic and acidic residues. The span at 739 to 749 (GSGGSGSGSGS) shows a compositional bias: gly residues. Positions 768–777 (DDIEEIKEEE) are enriched in acidic residues.

Belongs to the protein kinase superfamily. Tyr protein kinase family. Insulin receptor subfamily. Interacts with plexA; component of a receptor complex that mediates the repulsive signaling in response to Semaphorin ligands.

It localises to the cell membrane. Acts as a calcium-dependent, homophilic cell adhesion molecule that regulates neural recognition during the development of the nervous system. Component of the repulsive Plexin signaling response to regulate motor axon guidance at the embryonic stage. Also component of a receptor complex that is required in the adult visual system to innervate the lamina layer; specific targeting of R1-R6 axons. This chain is Tyrosine-protein kinase-like otk, found in Drosophila pseudoobscura pseudoobscura (Fruit fly).